Here is a 388-residue protein sequence, read N- to C-terminus: LIM/homeobox protein Lhx9 (388 aa).

2 LIM zinc-binding domains span residues 69 to 130 (ISDR…CHLG) and 131 to 193 (ISAS…LSYT). 3 disordered regions span residues 239 to 263 (ENEADHLDRDQQPYPPSQKTKRMRT), 321 to 356 (ENGGVDKADGTSLPAPPSADSGALTPPGTATTLTDL), and 369 to 388 (SNMDSHESGSPSQTTLTNLF). The homeobox DNA-binding region spans 267–326 (HHQLRTMKSYFAINHNPDAKDLKQLAQKTGLTKRVLQVWFQNARAKFRRNLLRQENGGVD). Residues 344–356 (LTPPGTATTLTDL) show a composition bias toward low complexity. Residues 376–388 (SGSPSQTTLTNLF) are compositionally biased toward polar residues.

As to quaternary structure, interacts with LDB1 and LDB2.

The protein resides in the nucleus. Involved in gonadal development. This chain is LIM/homeobox protein Lhx9 (Lhx9), found in Rattus norvegicus (Rat).